We begin with the raw amino-acid sequence, 296 residues long: 4-hydroxy-tetrahydrodipicolinate synthase (296 aa).

Thr-49 serves as a coordination point for pyruvate. Tyr-137 serves as the catalytic Proton donor/acceptor. Lys-165 acts as the Schiff-base intermediate with substrate in catalysis. Ile-207 is a pyruvate binding site.

The protein belongs to the DapA family. Homotetramer; dimer of dimers.

Its subcellular location is the cytoplasm. The enzyme catalyses L-aspartate 4-semialdehyde + pyruvate = (2S,4S)-4-hydroxy-2,3,4,5-tetrahydrodipicolinate + H2O + H(+). Its pathway is amino-acid biosynthesis; L-lysine biosynthesis via DAP pathway; (S)-tetrahydrodipicolinate from L-aspartate: step 3/4. Its function is as follows. Catalyzes the condensation of (S)-aspartate-beta-semialdehyde [(S)-ASA] and pyruvate to 4-hydroxy-tetrahydrodipicolinate (HTPA). The protein is 4-hydroxy-tetrahydrodipicolinate synthase of Rhodopseudomonas palustris (strain BisA53).